The primary structure comprises 227 residues: uncharacterized protein (227 aa).

The first 23 residues, 1-23, serve as a signal peptide directing secretion; it reads MKKLTVTFLTFISIFFAATAAFA.

This is an uncharacterized protein from Coxiella burnetii (strain RSA 493 / Nine Mile phase I).